The following is a 338-amino-acid chain: Ketol-acid reductoisomerase (NADP(+)) (338 aa).

In terms of domain architecture, KARI N-terminal Rossmann spans 1 to 181 (MKVFYDKDCD…GGGRAGIIET (181 aa)). NADP(+) is bound by residues 24–27 (YGSQ), arginine 47, and serine 52. The active site involves histidine 107. Glycine 133 is a binding site for NADP(+). Residues 182–327 (NFREETETDL…AKLRAMMPWI (146 aa)) enclose the KARI C-terminal knotted domain. Mg(2+)-binding residues include aspartate 190, glutamate 194, glutamate 226, and glutamate 230. Serine 251 is a binding site for substrate.

This sequence belongs to the ketol-acid reductoisomerase family. It depends on Mg(2+) as a cofactor.

The enzyme catalyses (2R)-2,3-dihydroxy-3-methylbutanoate + NADP(+) = (2S)-2-acetolactate + NADPH + H(+). The catalysed reaction is (2R,3R)-2,3-dihydroxy-3-methylpentanoate + NADP(+) = (S)-2-ethyl-2-hydroxy-3-oxobutanoate + NADPH + H(+). It functions in the pathway amino-acid biosynthesis; L-isoleucine biosynthesis; L-isoleucine from 2-oxobutanoate: step 2/4. Its pathway is amino-acid biosynthesis; L-valine biosynthesis; L-valine from pyruvate: step 2/4. Involved in the biosynthesis of branched-chain amino acids (BCAA). Catalyzes an alkyl-migration followed by a ketol-acid reduction of (S)-2-acetolactate (S2AL) to yield (R)-2,3-dihydroxy-isovalerate. In the isomerase reaction, S2AL is rearranged via a Mg-dependent methyl migration to produce 3-hydroxy-3-methyl-2-ketobutyrate (HMKB). In the reductase reaction, this 2-ketoacid undergoes a metal-dependent reduction by NADPH to yield (R)-2,3-dihydroxy-isovalerate. In Herminiimonas arsenicoxydans, this protein is Ketol-acid reductoisomerase (NADP(+)).